The chain runs to 102 residues: Citrate lyase acyl carrier protein (102 aa).

O-(phosphoribosyl dephospho-coenzyme A)serine is present on S14.

The protein belongs to the CitD family. In terms of assembly, oligomer with a subunit composition of (alpha,beta,gamma)6.

Its subcellular location is the cytoplasm. In terms of biological role, covalent carrier of the coenzyme of citrate lyase. The protein is Citrate lyase acyl carrier protein of Streptococcus equi subsp. zooepidemicus (strain H70).